We begin with the raw amino-acid sequence, 141 residues long: Hemoglobin subunit alpha (141 aa).

Residues valine 1 to glycine 22 form a disordered region. In terms of domain architecture, Globin spans valine 1–arginine 141. Histidine 58 serves as a coordination point for O2. Residue histidine 87 participates in heme b binding.

This sequence belongs to the globin family. As to quaternary structure, heterotetramer of two alpha chains and two beta chains. In terms of tissue distribution, red blood cells.

In terms of biological role, involved in oxygen transport from the lung to the various peripheral tissues. The protein is Hemoglobin subunit alpha (HBA) of Vipera aspis (Aspic viper).